A 378-amino-acid polypeptide reads, in one-letter code: Trans-enoyl reductase poxP (378 aa).

Residue 62–65 coordinates NADP(+); sequence CDWK. Position 151–158 (151–158) interacts with substrate; it reads SVFATLWI. Residues 187–190, 210–213, Tyr228, and 275–276 each bind NADP(+); these read STST, SPHN, and LE. 295-299 provides a ligand contact to substrate; sequence GLAAS. 364 to 365 contacts NADP(+); that stretch reads TS.

This sequence belongs to the zinc-containing alcohol dehydrogenase family. Monomer.

It participates in secondary metabolite biosynthesis. In terms of biological role, trans-enoyl reductase; part of the gene cluster that mediates the biosynthesis of oxaleimides, cytotoxic compounds containing an unusual disubstituted succinimide moiety. The first step of the pathway is provided by the HR-PKS poxF that serves in a new mode of collaborative biosynthesis with the PKS-NRPS poxE, by providing the olefin containing amino acid substrate via the synthesis of an ACP-bound dec-4-enoate. The cytochrome P450 monooxygenase poxM-catalyzed oxidation at the alpha-position creates the enzyme-bound 2-hydroxydec-4-enoyl-ACP thioester, which may be prone to spontaneous hydrolysis to yield 2-hydroxydec-4-enoic acid due to increased electrophilicity of the carbonyl. 2-hydroxydec-4-enoic acid can then be further oxidized by poxM to yield the alpha-ketoacid 2-oxodec-4-enoicacid, which is reductively aminated by the aminotransferase poxL to yield (S,E)-2-aminodec-4-enoic acid. The Hybrid PKS-NRPS synthetase poxE then performs condensation between the octaketide product of its PKS modules and the amino group of (S,E)-2-aminodec-4-enoic acid which is activated and incorporated by the adenylation domain. The resulting aminoacyl product can be cyclized by the Diels-Alderase PoxQ and reductively released by the reductive (R) domain of poxE to yield an aldehyde intermediate. The released aldehyde is then substrate for a Knoevenagel condensation by the hydrolyase poxO followed by an oxidation at the 5-position of the pyrrolidone ring. The presence of the olefin from the amino acid building block allows for migration of the substituted allyl group to occur. This allylic transposition reaction takes place in a conjugate addition, semipinacol-like fashion to yield a succinimide intermediate. Iterative two-electron oxidations of the C7 methyl of the succinimide intermediate to the carboxylic acid can be catalyzed by one of two remaining cytochrome P450 monooxygenasess poxC or poxD to yield oxaleimide A. Subsequent oxidation yields the maleimide scaffold oxaleimide I. Both oxaleimide A and oxaleimide I can undergo oxidative modifications in the decalin ring to yield the series of products oxaleimides B to H. The sequence is that of Trans-enoyl reductase poxP from Penicillium oxalicum.